The sequence spans 515 residues: Maturase K (515 aa).

The protein belongs to the intron maturase 2 family. MatK subfamily.

The protein localises to the plastid. The protein resides in the chloroplast. Its function is as follows. Usually encoded in the trnK tRNA gene intron. Probably assists in splicing its own and other chloroplast group II introns. The polypeptide is Maturase K (Pinus attenuata (Knobcone pine)).